A 116-amino-acid chain; its full sequence is Alpha-defensin 29 (116 aa).

The N-terminal stretch at 1-19 (MKTLVLLSALVLPCFQVQA) is a signal peptide. A propeptide spanning residues 20–60 (DPIQNTDEETKTEEQPEEEDQAVSVSFGGTEGSALQDVAQR) is cleaved from the precursor. A disordered region spans residues 22 to 44 (IQNTDEETKTEEQPEEEDQAVSV). 9 repeat units span residues 65–67 (CRK), 68–70 (CRV), 71–73 (CQK), 74–76 (CQV), 77–79 (CQK), 80–82 (CPV), 83–85 (CPT), 86–88 (CPQ), and 89–91 (CPK). The tract at residues 65–70 (CRKCRV) is 2 X 3 AA tandem repeats of C-R-X. The 3 X 3 AA tandem repeats of C-Q-X stretch occupies residues 71-79 (CQKCQVCQK). Residues 80 to 91 (CPVCPTCPQCPK) are 4 X 3 AA tandem repeats of C-P-X.

It belongs to the alpha-defensin family. Small bowel.

It is found in the secreted. Apparent precursor of a secreted, cationic, proline- and cysteine-rich peptide that contains Cys-Pro-Xaa repeats. Unlike cryptdin, the proposed mature peptide region lacks the structural motif characteristic of defensins. This is Alpha-defensin 29 from Mus musculus (Mouse).